An 804-amino-acid chain; its full sequence is Endoplasmin (804 aa).

An N-terminal signal peptide occupies residues 1-21 (MRVLWVLGLCCVLLTFGFVRA). Residues 42 to 44 (SRT) carry the SRT pseudosubstrate motif motif. Residue asparagine 62 is glycosylated (N-linked (GlcNAc...) asparagine). At serine 64 the chain carries Phosphoserine. Residue asparagine 107 is glycosylated (N-linked (GlcNAc...) asparagine). Residues asparagine 107, aspartate 149, and asparagine 162 each contribute to the ATP site. The residue at position 168 (lysine 168) is an N6-(2-hydroxyisobutyryl)lysine. Phosphoserine is present on serine 172. Residue phenylalanine 199 coordinates ATP. The N-linked (GlcNAc...) asparagine glycan is linked to asparagine 217. Residues 288-323 (TVEEPLEEDETAQEEKEEADDEAAVEEEEEEKKPKT) form a disordered region. A compositionally biased stretch (acidic residues) spans 289–317 (VEEPLEEDETAQEEKEEADDEAAVEEEEE). Serine 403 bears the Phosphoserine mark. Lysine 404 is subject to N6-succinyllysine. A glycan (N-linked (GlcNAc...) asparagine) is linked at asparagine 445. Serine 447 carries the phosphoserine modification. Position 479 is an N6-acetyllysine (lysine 479). Residues asparagine 481 and asparagine 502 are each glycosylated (N-linked (GlcNAc...) asparagine). Lysine 633 is subject to N6-succinyllysine. The segment at 749 to 804 (IDPEAQVEEEPEEEPEDTTEDTTDDSEQDEEETDAGAEEEEEEQETEKEPTEKDEL) is disordered. A compositionally biased stretch (acidic residues) spans 753–794 (AQVEEEPEEEPEDTTEDTTDDSEQDEEETDAGAEEEEEEQET). The span at 795 to 804 (EKEPTEKDEL) shows a compositional bias: basic and acidic residues. The short motif at 801-804 (KDEL) is the Prevents secretion from ER element.

The protein belongs to the heat shock protein 90 family. Homodimer; disulfide-linked. Component of an EIF2 complex at least composed of CELF1/CUGBP1, CALR, CALR3, EIF2S1, EIF2S2, HSP90B1 and HSPA5. Part of a large chaperone multiprotein complex comprising DNAJB11, HSP90B1, HSPA5, HYOU, PDIA2, PDIA4, PDIA6, PPIB, SDF2L1, UGGT1 and very small amounts of ERP29, but not, or at very low levels, CALR nor CANX. Interacts with AIMP1; regulates its retention in the endoplasmic reticulum. Hyperglycosylated form interacts with OS9; promoting its degradation by the endoplasmic reticulum associated degradation (ERAD). Interacts with CNPY3. This interaction is disrupted in the presence of ATP. Interacts with TLR4 and TLR9, but not with TLR3. Interacts with MZB1 in a calcium-dependent manner. Interacts with METTL23. Interacts with IL1B; the interaction facilitates cargo translocation into the ERGIC. Interacts with EIF2AK3. In terms of processing, phosphorylated by CK2. N-glycosylated cotranslationally at Asn-217 by STT3A-containing OST-A complex: this glycosylation is constitutive. In response to various stress, 5 additional facultative sites (Asn-62, Asn-107, Asn-445, Asn-481 and Asn-502) can be glycosylated post-translationally by STT3B-containing OST-B complex, leading to a hyperglycosylated form that is degraded by the ER-associated degradation (ERAD) pathway. In normal conditions, the OST-A complex together with CCDC134 prevent glycosylation at facultative sites during protein folding, thereby preventing hyperglycosylation. Mechanistically, nascent HSP90B1 is tethered during translation to a specialized CCDC134-containing translocon that forms a microenvironment for its folding, in which STT3A associates with the SRT pseudosubstrate motif, and prevents access to facultative glycosylation sites until folding is completed, rendering its facultative sites inaccessible to the OST-B complex.

The protein resides in the endoplasmic reticulum lumen. It localises to the sarcoplasmic reticulum lumen. Its subcellular location is the melanosome. The catalysed reaction is ATP + H2O = ADP + phosphate + H(+). In terms of biological role, ATP-dependent chaperone involved in the processing of proteins in the endoplasmic reticulum, regulating their transport. Together with MESD, acts as a modulator of the Wnt pathway by promoting the folding of LRP6, a coreceptor of the canonical Wnt pathway. When associated with CNPY3, required for proper folding of Toll-like receptors. Promotes folding and trafficking of TLR4 to the cell surface. May participate in the unfolding of cytosolic leaderless cargos (lacking the secretion signal sequence) such as the interleukin 1/IL-1 to facilitate their translocation into the ERGIC (endoplasmic reticulum-Golgi intermediate compartment) and secretion; the translocation process is mediated by the cargo receptor TMED10. This chain is Endoplasmin, found in Rattus norvegicus (Rat).